We begin with the raw amino-acid sequence, 189 residues long: Peptidyl-tRNA hydrolase (189 aa).

Tyr-15 serves as a coordination point for tRNA. The active-site Proton acceptor is His-20. Residues Phe-66, Asn-68, and Asn-114 each contribute to the tRNA site.

The protein belongs to the PTH family. As to quaternary structure, monomer.

It is found in the cytoplasm. It carries out the reaction an N-acyl-L-alpha-aminoacyl-tRNA + H2O = an N-acyl-L-amino acid + a tRNA + H(+). In terms of biological role, hydrolyzes ribosome-free peptidyl-tRNAs (with 1 or more amino acids incorporated), which drop off the ribosome during protein synthesis, or as a result of ribosome stalling. Functionally, catalyzes the release of premature peptidyl moieties from peptidyl-tRNA molecules trapped in stalled 50S ribosomal subunits, and thus maintains levels of free tRNAs and 50S ribosomes. The chain is Peptidyl-tRNA hydrolase from Streptococcus equi subsp. zooepidemicus (strain MGCS10565).